The chain runs to 319 residues: Annexin A5 (319 aa).

Ala2 bears the N-acetylalanine mark. 4 Annexin repeats span residues Phe13–Lys84, Pro85–Gln156, Ala168–Lys240, and Ser244–Gly315. Residue Lys27 forms a Glycyl lysine isopeptide (Lys-Gly) (interchain with G-Cter in SUMO1); alternate linkage. Lys27 is covalently cross-linked (Glycyl lysine isopeptide (Lys-Gly) (interchain with G-Cter in SUMO2); alternate). Residue Ser35 is modified to Phosphoserine. An N6-acetyllysine mark is found at Lys68, Lys74, Lys77, Lys95, and Lys99. Position 288 is an N6-succinyllysine (Lys288). A [IL]-x-C-x-x-[DE] motif motif is present at residues Leu312–Asp318.

It belongs to the annexin family. Monomer. Binds ATRX, EIF5B and DNMT1. S-nitrosylation is induced by interferon-gamma and oxidatively-modified low-densitity lipoprotein (LDL(ox)) possibly implicating the iNOS-S100A8/9 transnitrosylase complex.

In terms of biological role, this protein is an anticoagulant protein that acts as an indirect inhibitor of the thromboplastin-specific complex, which is involved in the blood coagulation cascade. This Rattus norvegicus (Rat) protein is Annexin A5 (Anxa5).